Consider the following 22-residue polypeptide: Zinc finger protein 326 (22 aa).

A disordered region spans residues 1–22 (QGYGFNEPEQTRNQGGSSWEAP). Over residues 11-22 (TRNQGGSSWEAP) the composition is skewed to polar residues.

Belongs to the AKAP95 family.

It localises to the nucleus matrix. Its function is as follows. Probable transcriptional activator which may play a role in neuronal differentiation. Able to bind DNA and activate expression in vitro. The polypeptide is Zinc finger protein 326 (Znf326) (Rattus norvegicus (Rat)).